The chain runs to 758 residues: 5-methyltetrahydropteroyltriglutamate--homocysteine methyltransferase (758 aa).

5-methyltetrahydropteroyltri-L-glutamate contacts are provided by residues 17–20 (RELK) and K117. Residues 434–436 (IGS) and E487 contribute to the L-homocysteine site. L-methionine-binding positions include 434 to 436 (IGS) and E487. 5-methyltetrahydropteroyltri-L-glutamate is bound by residues 518–519 (RC) and W564. L-homocysteine is bound at residue D602. D602 provides a ligand contact to L-methionine. E608 contributes to the 5-methyltetrahydropteroyltri-L-glutamate binding site. Zn(2+) is bound by residues H644, C646, and E668. Residue H697 is the Proton donor of the active site. C729 is a binding site for Zn(2+).

The protein belongs to the vitamin-B12 independent methionine synthase family. The cofactor is Zn(2+).

It catalyses the reaction 5-methyltetrahydropteroyltri-L-glutamate + L-homocysteine = tetrahydropteroyltri-L-glutamate + L-methionine. It participates in amino-acid biosynthesis; L-methionine biosynthesis via de novo pathway; L-methionine from L-homocysteine (MetE route): step 1/1. Functionally, catalyzes the transfer of a methyl group from 5-methyltetrahydrofolate to homocysteine resulting in methionine formation. This chain is 5-methyltetrahydropteroyltriglutamate--homocysteine methyltransferase, found in Yersinia pestis bv. Antiqua (strain Antiqua).